The primary structure comprises 425 residues: Adenosylhomocysteinase (425 aa).

Positions 60, 132, and 157 each coordinate substrate. An NAD(+)-binding site is contributed by 158–160; it reads TTT. Substrate is bound by residues Lys-187 and Asp-191. NAD(+) contacts are provided by residues Asn-192, 221 to 226, Glu-244, Asn-279, 300 to 302, and Asn-347; these read GYGWCG and SGH.

It belongs to the adenosylhomocysteinase family. It depends on NAD(+) as a cofactor.

It is found in the cytoplasm. The enzyme catalyses S-adenosyl-L-homocysteine + H2O = L-homocysteine + adenosine. The protein operates within amino-acid biosynthesis; L-homocysteine biosynthesis; L-homocysteine from S-adenosyl-L-homocysteine: step 1/1. In terms of biological role, may play a key role in the regulation of the intracellular concentration of adenosylhomocysteine. The polypeptide is Adenosylhomocysteinase (Synechocystis sp. (strain ATCC 27184 / PCC 6803 / Kazusa)).